Reading from the N-terminus, the 331-residue chain is Gamma-parvin (331 aa).

The residue at position 1 (M1) is an N-acetylmethionine. Residues 17–39 (EPPAEEELSKGGKKKYLPPTSRK) are disordered. 2 Calponin-homology (CH) domains span residues 44–151 (EELQ…KRFQ) and 210–317 (NAVK…CKHT).

Belongs to the parvin family. In terms of assembly, interacts with ILK; the interaction promotes the establishment of cell polarity required for leukocyte migration. Interacts with ARHGEF6; the guanine nucleotide exchange factor activity of ARHGEF6 is essential for the PARVG-induced enhancement of cell spreading. In terms of tissue distribution, expressed predominantly in lymphoid organs, including spleen, thymus, lymph node, bone marrow and peripheral blood leukocytes and moderately in the digestive tract, including stomach, duodenum, jejunum, ileum, ileocecum and appendix, as well as in lung and liver. Also expressed in tumors, but at a lower level than in the corresponding normal tissues.

The protein resides in the cell junction. The protein localises to the focal adhesion. Its subcellular location is the cell membrane. It is found in the cytoplasm. It localises to the cytoskeleton. In terms of biological role, plays a role with ILK in promoting the cell adhesion and spreading of leukocytes. This chain is Gamma-parvin (PARVG), found in Homo sapiens (Human).